The primary structure comprises 195 residues: Apoptosis-associated speck-like protein containing a CARD (195 aa).

A Pyrin domain is found at 1-91 (MGCTRDAILD…AEQLQETMSK (91 aa)). Residues K55 and K174 each participate in a glycyl lysine isopeptide (Lys-Gly) (interchain with G-Cter in ubiquitin) cross-link. The 89-residue stretch at 107-195 (TAKPGLHFVD…PYLVDDLEQS (89 aa)) folds into the CARD domain. S195 is modified (phosphoserine).

Self-associates; enforced oligomerization induces apoptosis, NF-kappa-B regulation and interleukin-1 beta secretion. Homooligomers can form disk-like particles of approximately 12 nm diameter and approximately 1 nm height. Component of several inflammasomes containing one pattern recognition receptor/sensor, such as NLRP1, NLRP2, NLRP3, NLRP6, NLRC4, AIM2, MEFV or NOD2, and probably NLRC4 or NLRP12. Major component of the ASC pyroptosome, a 1-2 um supramolecular assembly (one per macrophage cell) which consists of oligomerized PYCARD dimers and CASP1. Interacts with CASP1 (precursor form); the interaction induces activation of CASP1 leading to the processing of interleukin-1 beta; PYCARD competes with RIPK2 for binding to CASP1. Interacts with NLRP3; the interaction requires the homooligomerization of NLRP3. Interacts with NLRP2, NLRC4, MEFV, CARD16, AIM2, NOD2, RIGI, RIPK2, PYDC1, PYDC2, NLRP10, CASP8, CHUK, IKBKB and BAX. Component of the AIM2 PANoptosome complex, a multiprotein complex that drives inflammatory cell death (PANoptosis). In terms of processing, phosphorylated. 'Lys-63'-linked polyubiquitination by TRAF3 is critical for speck formation and inflammasome activation. 'Lys-63'-linked deubiquitinated by USP50; a crucial step for NLRP3-mediated inflammasome activation. 'Lys-63'-linked polyubiquitination by PELI1 is also critical for speck formation and inflammasome activation. Deubiquitinated by USP3 that cleaves 'Lys-48'-linked ubiquitin chains and strengthens its stability by blocking proteasomal degradation.

Its subcellular location is the cytoplasm. The protein localises to the inflammasome. It localises to the endoplasmic reticulum. The protein resides in the mitochondrion. It is found in the nucleus. Its function is as follows. Functions as a key mediator in apoptosis and inflammation. Promotes caspase-mediated apoptosis involving predominantly caspase-8 and also caspase-9 in a probable cell type-specific manner. Involved in activation of the mitochondrial apoptotic pathway, promotes caspase-8-dependent proteolytic maturation of BID independently of FADD in certain cell types and also mediates mitochondrial translocation of BAX and activates BAX-dependent apoptosis coupled to activation of caspase-9, -2 and -3. Involved in innate immune response by acting as an integral adapter in the assembly of various inflammasomes (NLRP2, NLRP3, NLRP6 and AIM2) which recruit and activate caspase-1 leading to processing and secretion of pro-inflammatory cytokines. Caspase-1-dependent inflammation leads to macrophage pyroptosis, a form of cell death. The function as activating adapter in different types of inflammasomes is mediated by the pyrin and CARD domains and their homotypic interactions. Clustered PYCARD nucleates the formation of caspase-1 filaments through the interaction of their respective CARD domains, acting as a platform for of caspase-1 polymerization. In the NLRC4 inflammasomes seems not be required but facilitates the processing of procaspase-1. In cooperation with NOD2 involved in an inflammasome activated by bacterial muramyl dipeptide leading to caspase-1 activation. May be involved in RIGI-triggered pro-inflammatory responses and inflammasome activation. In collaboration with AIM2 which detects cytosolic double-stranded DNA may also be involved in a caspase-1-independent cell death that involves caspase-8. In adaptive immunity may be involved in maturation of dendritic cells to stimulate T-cell immunity and in cytoskeletal rearrangements coupled to chemotaxis and antigen uptake may be involved in post-transcriptional regulation of the guanine nucleotide exchange factor DOCK2; the latter function is proposed to involve the nuclear form. Also involved in transcriptional activation of cytokines and chemokines independent of the inflammasome; this function may involve AP-1, NF-kappa-B, MAPK and caspase-8 signaling pathways. For regulation of NF-kappa-B activating and inhibiting functions have been reported. Modulates NF-kappa-B induction at the level of the IKK complex by inhibiting kinase activity of CHUK and IKBK. Proposed to compete with RIPK2 for association with CASP1 thereby down-regulating CASP1-mediated RIPK2-dependent NF-kappa-B activation and activating interleukin-1 beta processing. Modulates host resistance to DNA virus infection, probably by inducing the cleavage of and inactivating CGAS in presence of cytoplasmic double-stranded DNA. This is Apoptosis-associated speck-like protein containing a CARD (PYCARD) from Bos taurus (Bovine).